The chain runs to 673 residues: uncharacterized protein (673 aa).

The signal sequence occupies residues 1-24; sequence MKIHNIIKIIIVVCLEGFALTSFA. 6 helical membrane passes run 224–244, 253–273, 410–430, 436–456, 469–489, and 562–582; these read NAIGAALILYVMFFAFNMVLN, IALFVIKLLFVTYFSIGLGPL, IILISGLVFAVIFLSILLYFI, CMITIYVMTYVSPIFIPMMLF, VSLSCALQPAVVAGFIALLIT, and VVSILAELLCVLVFSVIFYYF. A disordered region spans residues 624 to 673; the sequence is AQATQGKPPSSGDMPGDGGSKRSEGQKGDDSFISSGGNSSGDSLSSSGGK. Residues 642 to 653 are compositionally biased toward basic and acidic residues; it reads GSKRSEGQKGDD. Over residues 654 to 673 the composition is skewed to low complexity; it reads SFISSGGNSSGDSLSSSGGK.

It belongs to the TrbL/VirB6 family.

The protein localises to the cell membrane. This is an uncharacterized protein from Rickettsia bellii (strain RML369-C).